A 188-amino-acid polypeptide reads, in one-letter code: dTTP/UTP pyrophosphatase (188 aa).

Aspartate 70 (proton acceptor) is an active-site residue.

It belongs to the Maf family. YhdE subfamily. A divalent metal cation is required as a cofactor.

Its subcellular location is the cytoplasm. It catalyses the reaction dTTP + H2O = dTMP + diphosphate + H(+). The enzyme catalyses UTP + H2O = UMP + diphosphate + H(+). Nucleoside triphosphate pyrophosphatase that hydrolyzes dTTP and UTP. May have a dual role in cell division arrest and in preventing the incorporation of modified nucleotides into cellular nucleic acids. This is dTTP/UTP pyrophosphatase from Clostridium botulinum (strain Eklund 17B / Type B).